A 37-amino-acid chain; its full sequence is QIETNKKCQGGSCASVCRKVIGVAAGKCINGRCVCYP.

Gln1 is modified (pyrrolidone carboxylic acid). 3 cysteine pairs are disulfide-bonded: Cys8–Cys28, Cys13–Cys33, and Cys17–Cys35.

Expressed by the venom gland.

The protein resides in the secreted. Inhibits A-type (Kv4) voltage-gated potassium channels of striated neurons (Ki=131 nM), probably by acting as a pore blocker. Has also been shown to block ERG1/Kv11.1/KCNH2 potassium channels (IC(50)=7.9 uM). The presence of the Kv4-associated proteins DPP6 or DPP10 is mandatory to have high-affinity blockade of Kv4.2/KCND2 and Kv4.3/KCND3 channels (80-90% inhibition at 500 nM of toxin). In contrast, the presence of the Kv4-associated protein KChIP1/KCNIP1 does not enhance the affinity blockade (only 40% inhibition at 500 nM). In adult rat brain, the toxin binds to sites in the striatum, and cerebellum. It shares the same target in rat brain than AaTX1 (AC Q867F4) and BmTX3 (AC Q8I0L5). In DPP6 knockout mice, A-type currents are about 20-fold less affected by the toxin. In rodent models of Parkinson's disease, the toxin reduces motor symptoms and emotional and cognitive symptoms. This is Potassium channel toxin alpha-KTx 15.3 from Androctonus mauritanicus mauritanicus (Scorpion).